A 512-amino-acid polypeptide reads, in one-letter code: Protein maelstrom homolog (512 aa).

Positions 9–75 (AKGPFYFFMM…NPKEAGGYGE (67 aa)) form a DNA-binding region, HMG box. Disordered stretches follow at residues 49–72 (APHEREPYNQRAKQNKANPKEAGG), 360–421 (RMSK…GTRA), and 439–465 (QSANRSPTKKNPWSRENKLTEVRDPQS). A compositionally biased stretch (polar residues) spans 360–370 (RMSKLTTTSDN). Residues 379–388 (RSTDRTDRDV) show a composition bias toward basic and acidic residues. Polar residues-rich tracts occupy residues 393-421 (IYSSRAGTVTGKPSTIVPQQPASSGGTRA) and 439-449 (QSANRSPTKKN). Over residues 451–464 (WSRENKLTEVRDPQ) the composition is skewed to basic and acidic residues.

This sequence belongs to the maelstrom family.

It is found in the cytoplasm. It localises to the nucleus. Plays a central role during gametogenesis by repressing transposable elements and preventing their mobilization, which is essential for the germline integrity. Probably acts via the piRNA metabolic process, which mediates the repression of transposable elements during meiosis by forming complexes composed of piRNAs and Piwi proteins and governs the repression of transposons. This Culex quinquefasciatus (Southern house mosquito) protein is Protein maelstrom homolog (mael).